The following is a 194-amino-acid chain: dATP triphosphohydrolase (194 aa).

R17 contacts dATP. Co(2+) is bound by residues H32, H71, D72, E75, D80, and D123.

It belongs to the Caudovirales dATP triphosphohydrolase family. Requires Co(2+) as cofactor.

It catalyses the reaction dATP + H2O = 2'-deoxyadenosine + triphosphate + H(+). The enzyme catalyses dADP + H2O = 2'-deoxyadenosine + diphosphate. The catalysed reaction is dAMP + H2O = 2'-deoxyadenosine + phosphate. Its function is as follows. Catalyzes the hydrolysis of dATP, dADP and dAMP into dA. This step is essential for Z-genome synthesis (containing aminoadenine instead of adenine). Specifically removes dATP and its precursor dADP from the nucleotide pool of the host, preventing the incorporation of A into the phage genome and favoring the integration of the Z-base into the viral genome. The protein is dATP triphosphohydrolase (datZ) of Salmonella phage PMBT28.